The chain runs to 239 residues: Ribonuclease 3 (239 aa).

Positions 12–137 (REKVEAVIGY…LIAAIYLDAG (126 aa)) constitute an RNase III domain. Residue Glu50 coordinates Mg(2+). Asp54 is an active-site residue. Asp123 and Glu126 together coordinate Mg(2+). Residue Glu126 is part of the active site. The region spanning 162–231 (DAKTELQEWA…ATRLLEREGV (70 aa)) is the DRBM domain.

The protein belongs to the ribonuclease III family. As to quaternary structure, homodimer. Mg(2+) is required as a cofactor.

The protein resides in the cytoplasm. The enzyme catalyses Endonucleolytic cleavage to 5'-phosphomonoester.. Functionally, digests double-stranded RNA. Involved in the processing of primary rRNA transcript to yield the immediate precursors to the large and small rRNAs (23S and 16S). Processes some mRNAs, and tRNAs when they are encoded in the rRNA operon. Processes pre-crRNA and tracrRNA of type II CRISPR loci if present in the organism. The polypeptide is Ribonuclease 3 (Allorhizobium ampelinum (strain ATCC BAA-846 / DSM 112012 / S4) (Agrobacterium vitis (strain S4))).